We begin with the raw amino-acid sequence, 112 residues long: Putative inner membrane protein YafU (112 aa).

The Cytoplasmic segment spans residues 1-21; it reads MSSERDLVNFLGDFSMDVAKA. A helical transmembrane segment spans residues 22-42; it reads VIAGGVATAIGSLASFACVSF. Position 43 (G43) is a topological domain, periplasmic. The helical transmembrane segment at 44–64 threads the bilayer; the sequence is FPVILVGGAILLTGIVCTVVL. At 65 to 112 the chain is on the cytoplasmic side; sequence NEIDAQCHLSEKLKYAIRDGLKRQQELDKWKRENMTPFMYVLNTPPVI.

The protein localises to the cell inner membrane. The chain is Putative inner membrane protein YafU (yafU) from Escherichia coli (strain K12).